A 490-amino-acid chain; its full sequence is MIPVVALVGRPNVGKSTLFNRLTRTRDALVADFPGLTRDRKYGRAHLAGYEFIVVDTGGIDGTEEGIETRMAEQSLAAIEEADVVLFMTDARAGLTAADLAIAQHLRSREKTTFVVANKVDGIDADSACAEFWSLGLGEVYQMAAAQGRGVTNMIEYSLAPYAEAMGITKDGEGEESEEEREYTEEEAEAEQKRLQDLPIKLAIIGKPNVGKSTLTNRILGEERVVVYDEPGTTRDSIYIPMEREGREYVLIDTAGVRRRSKVHETVEKFSVIKTLKAVEDCNVVLLIIDAREGIAEQDLGLLGFALNAGRALVIAVNKWDGIDQEVKDRVKSELDRRLGFIDFARIHFISALHGTGVGHLYESIEEAYDSATRRVSTSMLTRIMQMAQDDHQPPLVNGRRVKLKYAHAGGYNPPIVVVHGNQVKKLPDSYKRFMMNYYRRSLKVIGTPIQIRFQDGGNPFEGMNTKKLTVSQERRRKRMVGHIRDKNKD.

2 consecutive EngA-type G domains span residues 3-166 (PVVA…AEAM) and 200-373 (IKLA…DSAT). GTP-binding positions include 9 to 16 (GRPNVGKS), 56 to 60 (DTGGI), 118 to 121 (NKVD), 206 to 213 (GKPNVGKS), 253 to 257 (DTAGV), and 318 to 321 (NKWD). A KH-like domain is found at 374–458 (RRVSTSMLTR…PIQIRFQDGG (85 aa)).

Belongs to the TRAFAC class TrmE-Era-EngA-EngB-Septin-like GTPase superfamily. EngA (Der) GTPase family. In terms of assembly, associates with the 50S ribosomal subunit.

Its function is as follows. GTPase that plays an essential role in the late steps of ribosome biogenesis. The chain is GTPase Der from Shewanella piezotolerans (strain WP3 / JCM 13877).